Reading from the N-terminus, the 150-residue chain is Single-stranded DNA-binding protein rim1, mitochondrial (150 aa).

A mitochondrion-targeting transit peptide spans 1–22; it reads MLFLKSSRAFSKRLFSSSTVRY. Residues 25–125 enclose the SSB domain; that stretch reads IQRLTLTGNL…HVSADVLFYP (101 aa). The tract at residues 127–150 is disordered; the sequence is NKNGDESGEETHPELDADPMINSF. Residues 128 to 141 are compositionally biased toward basic and acidic residues; it reads KNGDESGEETHPEL.

It localises to the mitochondrion. Functionally, this protein binds preferentially and cooperatively to ss-DNA. Involved in mitochondrial DNA replication. The polypeptide is Single-stranded DNA-binding protein rim1, mitochondrial (rim1) (Schizosaccharomyces pombe (strain 972 / ATCC 24843) (Fission yeast)).